Consider the following 126-residue polypeptide: Major sperm protein 3 (126 aa).

Ala2 carries the post-translational modification N-acetylalanine. An MSP domain is found at 8 to 125 (DIATMPAQKV…RRKNLPIEYN (118 aa)).

As to expression, sperm.

The protein localises to the cell projection. The protein resides in the pseudopodium. It localises to the cytoplasm. It is found in the cytoskeleton. Central component in molecular interactions underlying sperm crawling. Forms an extensive filament system that extends from sperm villipoda, along the leading edge of the pseudopod. The protein is Major sperm protein 3 (MSP-3) of Globodera rostochiensis (Golden nematode worm).